We begin with the raw amino-acid sequence, 337 residues long: Glyceraldehyde-3-phosphate dehydrogenase (337 aa).

Residues 12 to 13 (RI), Asp-34, and Arg-79 contribute to the NAD(+) site. D-glyceraldehyde 3-phosphate-binding positions include 150 to 152 (SCT), Thr-181, 210 to 211 (TG), and Arg-233. The active-site Nucleophile is Cys-151. NAD(+) is bound at residue Asn-315.

The protein belongs to the glyceraldehyde-3-phosphate dehydrogenase family. As to quaternary structure, homotetramer.

The protein resides in the cytoplasm. The enzyme catalyses D-glyceraldehyde 3-phosphate + phosphate + NAD(+) = (2R)-3-phospho-glyceroyl phosphate + NADH + H(+). It participates in carbohydrate degradation; glycolysis; pyruvate from D-glyceraldehyde 3-phosphate: step 1/5. The protein is Glyceraldehyde-3-phosphate dehydrogenase of Cryphonectria parasitica (Chestnut blight fungus).